The following is a 409-amino-acid chain: MDRNPELAIADARPSQDGRAAPSRLDDAQLAELASRIKAWGRELGFGAIGISDTDLSEAEAGLAAWLEAGCHGEMDYMAKHGMKRARPAELVAGTRRVISARLAYLPAGTLDGAPDAQGARRDWRAREAARIADPQAAVVSVYARGRDYHKVLRNRLQTLAERIEAEIGAFGHRVFTDSAPVLEVELAQKAGVGWRGKHTLLLQRDAGSFFFLGEIYVDVPLPADAQTSPDAAPETPGAHCGSCTRCLGACPTGAIVAPYRVDARRCISYLTIELHGSIPEPLRPLIGNRVYGCDDCQLVCPWNKFAQAAPVADFDVRHGLDRASLVELFEWTAEQFDERMQGSAIRRIGYERWLRNLAVGLGNALRAAPGGIGPDARAAIVAALRARLDDPCVSALVREHVEWALRAA.

Residues 1 to 23 (MDRNPELAIADARPSQDGRAAPS) form a disordered region. The Proton donor role is filled by D178. Residues 232-261 (AAPETPGAHCGSCTRCLGACPTGAIVAPYR) enclose the 4Fe-4S ferredoxin-type domain. [4Fe-4S] cluster contacts are provided by C241, C244, C247, C251, C267, C294, C297, and C301.

This sequence belongs to the QueG family. As to quaternary structure, monomer. The cofactor is cob(II)alamin. [4Fe-4S] cluster is required as a cofactor.

It is found in the cytoplasm. It carries out the reaction epoxyqueuosine(34) in tRNA + AH2 = queuosine(34) in tRNA + A + H2O. It functions in the pathway tRNA modification; tRNA-queuosine biosynthesis. Catalyzes the conversion of epoxyqueuosine (oQ) to queuosine (Q), which is a hypermodified base found in the wobble positions of tRNA(Asp), tRNA(Asn), tRNA(His) and tRNA(Tyr). The chain is Epoxyqueuosine reductase from Burkholderia pseudomallei (strain K96243).